Consider the following 450-residue polypeptide: Chromosomal replication initiator protein DnaA (450 aa).

Residues 1–79 are domain I, interacts with DnaA modulators; that stretch reads MENIHDLWNR…TGEELLIKFI (79 aa). Residues 79-111 are domain II; the sequence is ITPPNQSEDDFEFQRSSKKHRKPYEESTDFPQS. The segment at 112 to 328 is domain III, AAA+ region; sequence MLNPKYTFDT…GALIRVVAYS (217 aa). Positions 156, 158, 159, and 160 each coordinate ATP. Residues 329-450 form a domain IV, binds dsDNA region; it reads SLINKEITAD…KEIEEKLKQL (122 aa).

Belongs to the DnaA family. Oligomerizes as a right-handed, spiral filament on DNA at oriC.

Its subcellular location is the cytoplasm. In terms of biological role, plays an essential role in the initiation and regulation of chromosomal replication. ATP-DnaA binds to the origin of replication (oriC) to initiate formation of the DNA replication initiation complex once per cell cycle. Binds the DnaA box (a 9 base pair repeat at the origin) and separates the double-stranded (ds)DNA. Forms a right-handed helical filament on oriC DNA; dsDNA binds to the exterior of the filament while single-stranded (ss)DNA is stabiized in the filament's interior. The ATP-DnaA-oriC complex binds and stabilizes one strand of the AT-rich DNA unwinding element (DUE), permitting loading of DNA polymerase. After initiation quickly degrades to an ADP-DnaA complex that is not apt for DNA replication. Binds acidic phospholipids. This is Chromosomal replication initiator protein DnaA from Geobacillus sp. (strain WCH70).